The primary structure comprises 257 residues: Electron transfer flavoprotein subunit beta (257 aa).

This sequence belongs to the ETF beta-subunit/FixA family. In terms of assembly, heterodimer of an alpha and a beta subunit. Requires FAD as cofactor. AMP is required as a cofactor.

Functionally, the electron transfer flavoprotein serves as a specific electron acceptor for other dehydrogenases. It transfers the electrons to the main respiratory chain via ETF-ubiquinone oxidoreductase (ETF dehydrogenase). The sequence is that of Electron transfer flavoprotein subunit beta (etfB) from Bacillus subtilis (strain 168).